Reading from the N-terminus, the 34-residue chain is Photosystem II reaction center protein Psb30 (34 aa).

The chain crosses the membrane as a helical span at residues 6–26 (VIGQLVSTGAIMLLGPAIIIL).

The protein belongs to the Psb30/Ycf12 family. In terms of assembly, PSII is composed of 1 copy each of membrane proteins PsbA, PsbB, PsbC, PsbD, PsbE, PsbF, PsbH, PsbI, PsbJ, PsbK, PsbL, PsbM, PsbT, PsbX, PsbY, PsbZ, Psb30/Ycf12, peripheral proteins of the oxygen-evolving complex and a large number of cofactors. It forms dimeric complexes.

It is found in the plastid. It localises to the chloroplast thylakoid membrane. In terms of biological role, a core subunit of photosystem II (PSII), probably helps stabilize the reaction center. The sequence is that of Photosystem II reaction center protein Psb30 from Thalassiosira pseudonana (Marine diatom).